Reading from the N-terminus, the 128-residue chain is Large-conductance mechanosensitive channel (128 aa).

Transmembrane regions (helical) follow at residues 10 to 30 and 76 to 96; these read FAMR…SAFG and GLFI…FMMI.

Belongs to the MscL family. In terms of assembly, homopentamer.

The protein resides in the cell inner membrane. Channel that opens in response to stretch forces in the membrane lipid bilayer. May participate in the regulation of osmotic pressure changes within the cell. This Haemophilus influenzae (strain PittEE) protein is Large-conductance mechanosensitive channel.